The following is a 102-amino-acid chain: MAAIPMHHGLLLAAILFALGMIGILVRRNLIFILMSIEIMLNAAGLAFVVAGSHWTQADGQVMFIFILSVAAAEVSVGLALLLLLHRRFQTLDADAVSKMRG.

3 consecutive transmembrane segments (helical) span residues 6-26 (MHHGLLLAAILFALGMIGILV), 30-50 (LIFILMSIEIMLNAAGLAFVV), and 64-84 (FIFILSVAAAEVSVGLALLLL).

The protein belongs to the complex I subunit 4L family. As to quaternary structure, NDH-1 is composed of 14 different subunits. Subunits NuoA, H, J, K, L, M, N constitute the membrane sector of the complex.

The protein resides in the cell inner membrane. The catalysed reaction is a quinone + NADH + 5 H(+)(in) = a quinol + NAD(+) + 4 H(+)(out). Functionally, NDH-1 shuttles electrons from NADH, via FMN and iron-sulfur (Fe-S) centers, to quinones in the respiratory chain. The immediate electron acceptor for the enzyme in this species is believed to be ubiquinone. Couples the redox reaction to proton translocation (for every two electrons transferred, four hydrogen ions are translocated across the cytoplasmic membrane), and thus conserves the redox energy in a proton gradient. This chain is NADH-quinone oxidoreductase subunit K, found in Nitrosospira multiformis (strain ATCC 25196 / NCIMB 11849 / C 71).